The sequence spans 596 residues: Succinate dehydrogenase flavoprotein subunit (596 aa).

FAD is bound by residues 18-23 (GAGGAG), 41-56 (SKLF…AQGG), and D225. The residue at position 49 (H49) is a Tele-8alpha-FAD histidine. Residues H246 and T258 each contribute to the substrate site. R290 (proton acceptor) is an active-site residue. H357 lines the substrate pocket. E391 lines the FAD pocket. R402 contributes to the substrate binding site. 407–408 (SL) lines the FAD pocket.

It belongs to the FAD-dependent oxidoreductase 2 family. FRD/SDH subfamily. As to quaternary structure, part of an enzyme complex containing four subunits: a flavoprotein, an iron-sulfur, cytochrome b-556, and a hydrophobic anchor protein. The cofactor is FAD.

The protein resides in the cell inner membrane. The catalysed reaction is a quinone + succinate = fumarate + a quinol. It functions in the pathway carbohydrate metabolism; tricarboxylic acid cycle; fumarate from succinate (bacterial route): step 1/1. This is Succinate dehydrogenase flavoprotein subunit (sdhA) from Rickettsia bellii (strain RML369-C).